A 131-amino-acid chain; its full sequence is ATP synthase epsilon chain (131 aa).

It belongs to the ATPase epsilon chain family. As to quaternary structure, F-type ATPases have 2 components, CF(1) - the catalytic core - and CF(0) - the membrane proton channel. CF(1) has five subunits: alpha(3), beta(3), gamma(1), delta(1), epsilon(1). CF(0) has three main subunits: a, b and c.

The protein localises to the cell membrane. Produces ATP from ADP in the presence of a proton gradient across the membrane. This Clostridium novyi (strain NT) protein is ATP synthase epsilon chain.